Here is a 145-residue protein sequence, read N- to C-terminus: uncharacterized protein (145 aa).

The segment at 95–119 (YVDSTSRTPSAKKDMQGLSVSEKQT) is disordered.

This is an uncharacterized protein from Treponema pallidum (strain Nichols).